We begin with the raw amino-acid sequence, 229 residues long: Large ribosomal subunit protein uL1 (229 aa).

The protein belongs to the universal ribosomal protein uL1 family. Part of the 50S ribosomal subunit.

Binds directly to 23S rRNA. The L1 stalk is quite mobile in the ribosome, and is involved in E site tRNA release. Functionally, protein L1 is also a translational repressor protein, it controls the translation of the L11 operon by binding to its mRNA. The sequence is that of Large ribosomal subunit protein uL1 from Chlorobium luteolum (strain DSM 273 / BCRC 81028 / 2530) (Pelodictyon luteolum).